A 244-amino-acid chain; its full sequence is ATP-dependent Clp protease ATP-binding subunit CLPT4, chloroplastic (244 aa).

A chloroplast-targeting transit peptide spans 1–64 (MQALQASRLT…WRSSGRVITR (64 aa)). Low complexity predominate over residues 30–48 (SRPISSGVSSSQELSSRSS). Disordered stretches follow at residues 30 to 55 (SRPI…TKSW) and 220 to 244 (GRRY…VSFL).

Belongs to the ClpA/ClpB family.

Its subcellular location is the plastid. It is found in the chloroplast. Its function is as follows. Accessory protein regulating the assembly of the plastid Clp protease system. This chain is ATP-dependent Clp protease ATP-binding subunit CLPT4, chloroplastic, found in Chlamydomonas reinhardtii (Chlamydomonas smithii).